The sequence spans 475 residues: Fez family zinc finger protein 1 (475 aa).

Positions 28 to 43 (PLAFSIERIMARTPEP) match the Engrailed homology 1 repressor motif. C2H2-type zinc fingers lie at residues 260–282 (FTCEVCGKVFNAHYNLTRHMPVH), 288–310 (FVCKVCGKGFRQASTLCRHKIIH), 316–338 (HKCNQCGKAFNRSSTLNTHTRIH), 344–366 (FVCEFCGKGFHQKGNYKNHKLTH), 372–394 (FKCNICNKAFHQVYNLTFHMHTH), and 400–423 (FTCPTCGKGFCRNFDLKKHVRKLH). A disordered region spans residues 425–475 (SSLGLTRTPTGEPSSDPPPQLQQPPPAPLPPLQPTLPPPGPLPSGLHQGHQ). Positions 427 to 437 (LGLTRTPTGEP) are enriched in polar residues. Residues 439–466 (SDPPPQLQQPPPAPLPPLQPTLPPPGPL) show a composition bias toward pro residues.

The protein belongs to the krueppel C2H2-type zinc-finger protein family.

It is found in the nucleus. Its function is as follows. Transcription repressor. Involved in the axonal projection and proper termination of olfactory sensory neurons (OSN). Plays a role in rostro-caudal patterning of the diencephalon and in prethalamic formation. Expression is required in OSN to cell-autonomously regulate OSN axon projections. Regulates non-cell-autonomously the layer formation of the olfactory bulb development and the interneurons. May be required for correct rostral migration of the interneuron progenitors. This is Fez family zinc finger protein 1 (Fezf1) from Mus musculus (Mouse).